A 71-amino-acid polypeptide reads, in one-letter code: DNA-directed RNA polymerase subunit omega (71 aa).

This sequence belongs to the RNA polymerase subunit omega family. The RNAP catalytic core consists of 2 alpha, 1 beta, 1 beta' and 1 omega subunit. When a sigma factor is associated with the core the holoenzyme is formed, which can initiate transcription.

It carries out the reaction RNA(n) + a ribonucleoside 5'-triphosphate = RNA(n+1) + diphosphate. Promotes RNA polymerase assembly. Latches the N- and C-terminal regions of the beta' subunit thereby facilitating its interaction with the beta and alpha subunits. In Campylobacter curvus (strain 525.92), this protein is DNA-directed RNA polymerase subunit omega.